The chain runs to 693 residues: Putative transmembrane protein ORF68 (693 aa).

An N-terminal signal peptide occupies residues 1 to 17 (MILTIILYTLLFSTCSA). Topologically, residues 18 to 666 (QSVHTMPEAV…WLTKFGTGGG (649 aa)) are extracellular. The stretch at 208-256 (SKAANNRMDALEDGMKNINTRVTETNLLLEKLSTEVTGALTQLENEIKM) forms a coiled coil. The helical transmembrane segment at 667–687 (IAGVTIGLLLPILAIVFSCYV) threads the bilayer. Residues 688 to 693 (FCKRRV) lie on the Cytoplasmic side of the membrane.

Its subcellular location is the host membrane. The sequence is that of Putative transmembrane protein ORF68 from Magallana gigas (Pacific oyster).